The primary structure comprises 407 residues: Serine hydroxymethyltransferase (407 aa).

Residues Leu120 and 124–126 (GHL) contribute to the (6S)-5,6,7,8-tetrahydrofolate site. Lys229 is subject to N6-(pyridoxal phosphate)lysine.

Belongs to the SHMT family. In terms of assembly, homodimer. Requires pyridoxal 5'-phosphate as cofactor.

The protein resides in the cytoplasm. The enzyme catalyses (6R)-5,10-methylene-5,6,7,8-tetrahydrofolate + glycine + H2O = (6S)-5,6,7,8-tetrahydrofolate + L-serine. Its pathway is one-carbon metabolism; tetrahydrofolate interconversion. The protein operates within amino-acid biosynthesis; glycine biosynthesis; glycine from L-serine: step 1/1. Functionally, catalyzes the reversible interconversion of serine and glycine with tetrahydrofolate (THF) serving as the one-carbon carrier. This reaction serves as the major source of one-carbon groups required for the biosynthesis of purines, thymidylate, methionine, and other important biomolecules. Also exhibits THF-independent aldolase activity toward beta-hydroxyamino acids, producing glycine and aldehydes, via a retro-aldol mechanism. The polypeptide is Serine hydroxymethyltransferase (Deinococcus deserti (strain DSM 17065 / CIP 109153 / LMG 22923 / VCD115)).